The chain runs to 1648 residues: MATDSASCEPDLSRTPGDTEGATAEAAKKEFDVDTLSKSELRMLLSVMEGELEARDLVIEALRARRKEVFIQERYGRFNLNDPFLALQRDYEAGPGDKEKPVCTNPLSILEAVMAHCRKMQERMSAQLVAAESRQKKLEMEKLQLQALEQEHKKLAAHLEEERGKNKHVVLMLVKECKQLSGKVVEEAQKLEEVMAQLEEEKKKTSELEEQLSAEKQRSSGMEAQLEKQLSEFDTEREQLRAKLSREEAHTTDLKEEIDKMKKMMEQMKKGSDGKPGLSLPRKTKDKRLASISVATEGPVTRSVACQTDVVTESTDPVKKLPLTVPIKPSTGSPLVPTNTKGNVGPSALLIRPGIDRQSSHSDLGPSPPTALPSSANRIEENGPSTGNAPDLSNSTPSTPSSTAPAAAQTPGTAPQNHSQAPTVHSLHSPCANTHPGLNPRIQAARFRFQGNANDPDQNGNNTQSPPSRDVSPTSRDNLVAKQLARNTVTQALSRFTSPQAGASSRLGVSPGGDAGTCPPVGRTGLKTPGAARVDRGNPPPIPPKKPGLSQTPSPPHPQLRASNAGAKVDNKIVASPPSTLPQGTKVVNEENVPKSSSPQLPPKPSIDLTVAPAGCPVSALATSQVGAWPAGTPGLNQPACSDSSLVIPATVAFCSSINPVSASSRSPGASDSLLVAASGWSPSLTPLLMSGGPAPLAGRPTLLQQAAAQGNVTLLSMLLNEEGLDINYSCEDGHSALYSAAKNGHTDCVRLLLNAEARVDAADKNGFTPLCVAAAQGHFECIELLTAYNANINHSAAGGQTPLYLACKNGNKECIKLLLEAGTDRSIKTRDGWTPIHAAVDTGNVDSLKLLMYHRVRAHGNSLSSEEPKSGLFSLNGGESPTGPSKPVVPADLINHADKEGWTAAHIAASKGFKNCLEVLCRHGGLEPERRDKCNRTVHDVATDDCKHLLENLNALKIPLRISVGEIQPSNDVSDDFECEHTICTLNIRKQTSWEDFSKAVSQALTNHFQAISSDGWWSLEDGTFNNATDSCIGLGTSSIRSIMLGSMPWSTGQSFSQSPWDFLKKKKVEQVLALLSGPQEGCLSSVTYASMIPLQMLQNYLRLVEQYHNVIFHGPEGSLQDYIANQLALCMKYRQMAAGFPCEIVRAEVDSGFSKEQLVDVFIRNACLIPVKQFPVKKKIIVILENLEKSSLSELLGDFLAPLENRSTESPCTFQKGNGTSECYYFHENCFLVGTIAKACLQGSDLLVQQHFRWVQLRWDCEPIQGLLQRFLRRKVVSKFRGQLPAPCDPVCKIVDWALSVWRQLNSCLARLGTPEALLGPKYFLSCPVVPGHAQATVKWMSKLWNAVIAPRVQEAILSRASMNKQPGTGQTASKKYPSQGQQAVVRAALSILLNKAVLHGCPLPRAELDQQIADFKGGSFPLSIVSSYSKKKVESGAWRKVNTSPRKKPGHFSSPTWNKPDPKREGMRNKTIPHLNTNRNSSLSKQQSLENDLSVTLTLDHRLSLGSDDEADLVKELQSMCSSKSESDISKIADSRDDLRKFDSSRTNPGTSAPLNLRTPVPQKEASPPSSRQTAECSNSKSKTEMGVSSVKSFLPVPRSKVAQCSQNTKRNSSSSNTRQLEINNNSKEENWTLDKHEQVEKPNK.

Disordered regions lie at residues 1–26, 200–250, 322–439, 451–476, and 492–608; these read MATD…TAEA, EEKK…EEAH, PLTV…PGLN, GNAN…PTSR, and ALSR…PSID. A coiled-coil region spans residues 119–274; the sequence is KMQERMSAQL…MEQMKKGSDG (156 aa). 2 stretches are compositionally biased toward basic and acidic residues: residues 200 to 218 and 225 to 250; these read EEKK…EKQR and QLEK…EEAH. Composition is skewed to polar residues over residues 330-342 and 372-392; these read STGS…NTKG and LPSS…APDL. Positions 393 to 415 are enriched in low complexity; the sequence is SNSTPSTPSSTAPAAAQTPGTAP. The segment covering 492 to 503 has biased composition (polar residues); that stretch reads ALSRFTSPQAGA. The residue at position 495 (Arg-495) is an Asymmetric dimethylarginine. ANK repeat units follow at residues 699–729, 733–762, 766–795, 799–828, 832–861, and 901–931; these read GRPT…DINY, DGHS…RVDA, NGFT…NINH, GGQT…DRSI, DGWT…RAHG, and EGWT…EPER. The tract at residues 1438 to 1492 is disordered; that stretch reads SGAWRKVNTSPRKKPGHFSSPTWNKPDPKREGMRNKTIPHLNTNRNSSLSKQQSL. A compositionally biased stretch (polar residues) spans 1477–1492; sequence HLNTNRNSSLSKQQSL. Ser-1510 is subject to Phosphoserine. Positions 1522-1648 are disordered; the sequence is SMCSSKSESD…KHEQVEKPNK (127 aa). The segment covering 1528 to 1547 has biased composition (basic and acidic residues); it reads SESDISKIADSRDDLRKFDS. 2 stretches are compositionally biased toward polar residues: residues 1548–1557 and 1571–1584; these read SRTNPGTSAP and PPSS…SNSK. The span at 1609–1623 shows a compositional bias: low complexity; the sequence is SQNTKRNSSSSNTRQ. Over residues 1630 to 1648 the composition is skewed to basic and acidic residues; it reads SKEENWTLDKHEQVEKPNK.

As to quaternary structure, interacts with CTTN/cortactin SH3 domain. Interacts with STRN, STRN4/zinedin and MOB4/phocein; this interactions mediate the association with the STRIPAK core complex and may regulate dendritic spine distribution of the STRIPAK complex in hippocampal neurons. Activation of glutamate receptors weakens the interaction with STRN and STRN4. As to expression, isoform 2 is predominantly expressed in brain (at protein level). In the brain, expressed at high levels in hypothalamus and striatum and at lower levels in cerebellum and cortex.

It localises to the cytoplasm. It is found in the cell cortex. Its subcellular location is the cell projection. The protein localises to the dendritic spine. In terms of biological role, regulates the dendritic spine distribution of CTTN/cortactin in hippocampal neurons, and thus controls dendritic spinogenesis and dendritic spine maintenance. Associates with the striatin-interacting phosphatase and kinase (STRIPAK) core complex to regulate dendritic spine distribution of the STRIPAK complex in hippocampal neurons. In Mus musculus (Mouse), this protein is Cortactin-binding protein 2 (Cttnbp2).